A 373-amino-acid polypeptide reads, in one-letter code: C-C chemokine receptor type 2 (373 aa).

Over M1–P60 the chain is Extracellular. A helical membrane pass occupies residues L61–I81. Over S82 to D91 the chain is Cytoplasmic. A helical transmembrane segment spans residues I92–A112. The Extracellular segment spans residues H113–L128. C126 and C203 are oxidised to a cystine. A helical transmembrane segment spans residues F129–I149. Topologically, residues D150–G170 are cytoplasmic. Y152 carries the post-translational modification Phosphotyrosine; by JAK2. Residues V171–F191 form a helical membrane-spanning segment. At T192–N220 the chain is on the extracellular side. The chain crosses the membrane as a helical span at residues I221–T241. The Cytoplasmic segment spans residues L242 to R256. Residues L257–F277 traverse the membrane as a helical segment. Residues L278–Q301 are Extracellular-facing. The helical transmembrane segment at V302–G322 threads the bilayer. At E323 to L373 the chain is on the cytoplasmic side.

It belongs to the G-protein coupled receptor 1 family. Interacts with ARRB1. Interacts (via extracellular N-terminal region) with beta-defensin DEFB106A/DEFB106B; this interaction may preferentially require specific tyrosine sulfation on CCR2. Interacts with NUP85; the interaction is required for CCR2 clusters formation on the cell membrane and CCR2 signaling. N-glycosylated. Post-translationally, sulfation increases the affinity for both monomeric and dimeric CCL2 with stronger binding to the monomeric form. Binding of sulfated CCR2 to CCL2 promotes conversion of CCL2 from dimer to monomer. Expressed in lung, spleen, kidney, thymus and macrophages.

It is found in the cell membrane. In terms of biological role, key functional receptor for CCL2 but can also bind CCL7 and CCL12. Its binding with CCL2 on monocytes and macrophages mediates chemotaxis and migration induction through the activation of the PI3K cascade, the small G protein Rac and lamellipodium protrusion. Also acts as a receptor for the beta-defensin DEFB106A/DEFB106B. Regulates the expression of T-cell inflammatory cytokines and T-cell differentiation, promoting the differentiation of T-cells into T-helper 17 cells (Th17) during inflammation. Facilitates the export of mature thymocytes by enhancing directional movement of thymocytes to sphingosine-1-phosphate stimulation and up-regulation of S1P1R expression; signals through the JAK-STAT pathway to regulate FOXO1 activity leading to an increased expression of S1P1R. Plays an important role in mediating peripheral nerve injury-induced neuropathic pain. Increases NMDA-mediated synaptic transmission in both dopamine D1 and D2 receptor-containing neurons, which may be caused by MAPK/ERK-dependent phosphorylation of GRIN2B/NMDAR2B. Mediates the recruitment of macrophages and monocytes to the injury site following brain injury. This Rattus norvegicus (Rat) protein is C-C chemokine receptor type 2 (Ccr2).